We begin with the raw amino-acid sequence, 463 residues long: Fumarate hydratase class II (463 aa).

Substrate is bound by residues 98 to 100, 129 to 132, 139 to 141, and threonine 187; these read SGT, HPND, and SSN. The active-site Proton donor/acceptor is the histidine 188. Serine 318 is an active-site residue. Substrate is bound by residues serine 319 and 324-326; that span reads KVN.

It belongs to the class-II fumarase/aspartase family. Fumarase subfamily. In terms of assembly, homotetramer.

The protein resides in the cytoplasm. It catalyses the reaction (S)-malate = fumarate + H2O. Its pathway is carbohydrate metabolism; tricarboxylic acid cycle; (S)-malate from fumarate: step 1/1. Involved in the TCA cycle. Catalyzes the stereospecific interconversion of fumarate to L-malate. This chain is Fumarate hydratase class II, found in Brucella melitensis biotype 1 (strain ATCC 23456 / CCUG 17765 / NCTC 10094 / 16M).